An 828-amino-acid chain; its full sequence is Protein ELFN1 (828 aa).

A signal peptide spans 1 to 25 (MAGHGWGTAWVLVAAATLLHAGGLA). Residues 26–418 (QGDCWLIEGD…VPSPSTATHY (393 aa)) are Extracellular-facing. LRR repeat units follow at residues 61–82 (TIVD…SLSR), 85–106 (NLTY…AFSG), 109–130 (NLQV…MLRG), 133–154 (KLEY…AFWE), and 157–178 (NIVN…TFAG). Residues asparagine 85, asparagine 90, and asparagine 122 are each glycosylated (N-linked (GlcNAc...) asparagine). In terms of domain architecture, LRRCT spans 190–253 (NPFYCSCELL…LSKLQSVCTE (64 aa)). A glycan (N-linked (GlcNAc...) asparagine) is linked at asparagine 210. Residues 258 to 293 (AEVLGPPRPVPGRSQPGHSPPPPPPEPSDMPCADDE) form a disordered region. The segment covering 275 to 285 (HSPPPPPPEPS) has biased composition (pro residues). The region spanning 312–399 (QTEARPSMKV…HNHTCLTICL (88 aa)) is the Fibronectin type-III domain. The N-linked (GlcNAc...) asparagine glycan is linked to asparagine 376. A helical membrane pass occupies residues 419–439 (IMTILGCLFGMVLVLGAVYYC). The Cytoplasmic segment spans residues 440–828 (LRKRRRQEEK…WKGVSAQHKS (389 aa)). Phosphoserine is present on residues serine 460 and serine 646. Disordered stretches follow at residues 627-674 (HHSV…IEKS) and 697-731 (KSRQ…GLGG). Over residues 638–652 (RASTSSSGSARSPRT) the composition is skewed to low complexity. A compositionally biased stretch (basic and acidic residues) spans 697–706 (KSRQYGEHRH). Residues 714–725 (AEPPAPPPPPPT) are compositionally biased toward pro residues.

As to quaternary structure, interacts with PPP1CA. In terms of tissue distribution, selectively expressed in perialvear somatostatin (Sst)-containing interneurons.

The protein localises to the membrane. It is found in the cell projection. Its subcellular location is the dendrite. Its function is as follows. Postsynaptic protein that regulates circuit dynamics in the central nervous system by modulating the temporal dynamics of interneuron recruitment. Specifically present in excitatory synapses onto oriens-lacunosum molecular (OLM) interneurons and acts as a regulator of presynaptic release probability to direct the formation of highly facilitating pyramidal-OLM synapses. Inhibits phosphatase activity of protein phosphatase 1 (PP1) complexes. This is Protein ELFN1 (Elfn1) from Mus musculus (Mouse).